We begin with the raw amino-acid sequence, 258 residues long: Imidazole glycerol phosphate synthase subunit HisF (258 aa).

Residues D11 and D130 contribute to the active site.

The protein belongs to the HisA/HisF family. As to quaternary structure, heterodimer of HisH and HisF.

The protein resides in the cytoplasm. It catalyses the reaction 5-[(5-phospho-1-deoxy-D-ribulos-1-ylimino)methylamino]-1-(5-phospho-beta-D-ribosyl)imidazole-4-carboxamide + L-glutamine = D-erythro-1-(imidazol-4-yl)glycerol 3-phosphate + 5-amino-1-(5-phospho-beta-D-ribosyl)imidazole-4-carboxamide + L-glutamate + H(+). It participates in amino-acid biosynthesis; L-histidine biosynthesis; L-histidine from 5-phospho-alpha-D-ribose 1-diphosphate: step 5/9. In terms of biological role, IGPS catalyzes the conversion of PRFAR and glutamine to IGP, AICAR and glutamate. The HisF subunit catalyzes the cyclization activity that produces IGP and AICAR from PRFAR using the ammonia provided by the HisH subunit. This Buchnera aphidicola subsp. Baizongia pistaciae (strain Bp) protein is Imidazole glycerol phosphate synthase subunit HisF.